The primary structure comprises 614 residues: ATP-dependent zinc metalloprotease FtsH (614 aa).

Residues 1–7 (MKKQWKK) lie on the Stromal side of the membrane. A helical transmembrane segment spans residues 8–28 (IVLFVLPVIITLITLSSFLFY). Residues 29–116 (NQDVVHNWSS…AHPSSSNVNL (88 aa)) are Lumenal-facing. Residues 117 to 137 (VSWLSNLLLPLILIITLFFFF) form a helical membrane-spanning segment. The Stromal portion of the chain corresponds to 138–614 (RRGNKSSSGP…EFMRIVEERV (477 aa)). Residue 211 to 218 (GPPGTGKT) participates in ATP binding. Histidine 432 contacts Zn(2+). Glutamate 433 is a catalytic residue. Residues histidine 436 and aspartate 510 each contribute to the Zn(2+) site.

The protein in the central section; belongs to the AAA ATPase family. It in the C-terminal section; belongs to the peptidase M41 family. In terms of assembly, homohexamer. Zn(2+) is required as a cofactor.

Its subcellular location is the plastid. It localises to the chloroplast thylakoid membrane. Functionally, acts as a processive, ATP-dependent zinc metallopeptidase. This chain is ATP-dependent zinc metalloprotease FtsH, found in Cyanidium caldarium (Red alga).